A 207-amino-acid chain; its full sequence is Large ribosomal subunit protein uL4 (207 aa).

Residues 44–78 form a disordered region; that stretch reads LRQGTHKTKTRSEVRGGGRKPWRQKGTGRARQGSI. Basic residues predominate over residues 60-71; the sequence is GGRKPWRQKGTG.

The protein belongs to the universal ribosomal protein uL4 family. Part of the 50S ribosomal subunit.

Its function is as follows. One of the primary rRNA binding proteins, this protein initially binds near the 5'-end of the 23S rRNA. It is important during the early stages of 50S assembly. It makes multiple contacts with different domains of the 23S rRNA in the assembled 50S subunit and ribosome. In terms of biological role, forms part of the polypeptide exit tunnel. This is Large ribosomal subunit protein uL4 from Halalkalibacterium halodurans (strain ATCC BAA-125 / DSM 18197 / FERM 7344 / JCM 9153 / C-125) (Bacillus halodurans).